The following is a 171-amino-acid chain: MTGTIRIIGIDPGLRRTGWAVIETVGNSLRFIGAGTVRSNDKADLASRLCQLHDGLAEILHLHMPQEAAVEATFVNKDAVATLKLGQARGIAMLVPARAGLRVAEYAPNAVKKAVIGVGHGEKRQIHMMVKVLMPKALFDGDDAADAIAVAICHAHHRQSPAWRLALEAQP.

Residues D11, E71, and D143 contribute to the active site. Residues D11, E71, and D143 each contribute to the Mg(2+) site.

This sequence belongs to the RuvC family. In terms of assembly, homodimer which binds Holliday junction (HJ) DNA. The HJ becomes 2-fold symmetrical on binding to RuvC with unstacked arms; it has a different conformation from HJ DNA in complex with RuvA. In the full resolvosome a probable DNA-RuvA(4)-RuvB(12)-RuvC(2) complex forms which resolves the HJ. The cofactor is Mg(2+).

Its subcellular location is the cytoplasm. The catalysed reaction is Endonucleolytic cleavage at a junction such as a reciprocal single-stranded crossover between two homologous DNA duplexes (Holliday junction).. Its function is as follows. The RuvA-RuvB-RuvC complex processes Holliday junction (HJ) DNA during genetic recombination and DNA repair. Endonuclease that resolves HJ intermediates. Cleaves cruciform DNA by making single-stranded nicks across the HJ at symmetrical positions within the homologous arms, yielding a 5'-phosphate and a 3'-hydroxyl group; requires a central core of homology in the junction. The consensus cleavage sequence is 5'-(A/T)TT(C/G)-3'. Cleavage occurs on the 3'-side of the TT dinucleotide at the point of strand exchange. HJ branch migration catalyzed by RuvA-RuvB allows RuvC to scan DNA until it finds its consensus sequence, where it cleaves and resolves the cruciform DNA. This is Crossover junction endodeoxyribonuclease RuvC from Chelativorans sp. (strain BNC1).